A 511-amino-acid polypeptide reads, in one-letter code: Cobyric acid synthase (511 aa).

The region spanning 251 to 443 is the GATase cobBQ-type domain; it reads LLDIAIICLP…IHGIFDNDIF (193 aa). Cysteine 332 functions as the Nucleophile in the catalytic mechanism. The active site involves histidine 435.

This sequence belongs to the CobB/CobQ family. CobQ subfamily.

It participates in cofactor biosynthesis; adenosylcobalamin biosynthesis. In terms of biological role, catalyzes amidations at positions B, D, E, and G on adenosylcobyrinic A,C-diamide. NH(2) groups are provided by glutamine, and one molecule of ATP is hydrogenolyzed for each amidation. This chain is Cobyric acid synthase, found in Listeria innocua serovar 6a (strain ATCC BAA-680 / CLIP 11262).